Consider the following 207-residue polypeptide: Uracil phosphoribosyltransferase (207 aa).

5-phospho-alpha-D-ribose 1-diphosphate contacts are provided by residues Arg-77, Arg-102, and 129 to 137; that span reads DPMLATGGS. Uracil-binding positions include Ile-192 and 197 to 199; that span reads GDA. Asp-198 is a 5-phospho-alpha-D-ribose 1-diphosphate binding site.

The protein belongs to the UPRTase family. Mg(2+) serves as cofactor.

The catalysed reaction is UMP + diphosphate = 5-phospho-alpha-D-ribose 1-diphosphate + uracil. Its pathway is pyrimidine metabolism; UMP biosynthesis via salvage pathway; UMP from uracil: step 1/1. Allosterically activated by GTP. Functionally, catalyzes the conversion of uracil and 5-phospho-alpha-D-ribose 1-diphosphate (PRPP) to UMP and diphosphate. This is Uracil phosphoribosyltransferase from Mycoplasma capricolum subsp. capricolum (strain California kid / ATCC 27343 / NCTC 10154).